The primary structure comprises 470 residues: 6-phospho-beta-galactosidase 1 (470 aa).

The D-galactose 6-phosphate site is built by Gln-23, His-120, Asn-163, Glu-164, and Asn-300. The active-site Proton donor is Glu-164. Glu-378 serves as the catalytic Nucleophile. D-galactose 6-phosphate is bound by residues Ser-434, Trp-435, Lys-441, and Tyr-443.

Belongs to the glycosyl hydrolase 1 family.

The enzyme catalyses a 6-phospho-beta-D-galactoside + H2O = D-galactose 6-phosphate + an alcohol. It participates in carbohydrate metabolism; lactose degradation; D-galactose 6-phosphate and beta-D-glucose from lactose 6-phosphate: step 1/1. The polypeptide is 6-phospho-beta-galactosidase 1 (Streptococcus pneumoniae serotype 4 (strain ATCC BAA-334 / TIGR4)).